Here is a 1439-residue protein sequence, read N- to C-terminus: Gag-Pol polyprotein (1439 aa).

Gly-2 carries N-myristoyl glycine; by host lipidation. An interaction with Gp41 region spans residues 7-31 (VLSGGELDRWEKIRLRPGGKKKYRL). Positions 8 to 43 (LSGGELDRWEKIRLRPGGKKKYRLKHIVWASRELER) are interaction with host CALM1. Residues 12-19 (ELDRWEKI) are interaction with host AP3D1. Positions 14–33 (DRWEKIRLRPGGKKKYRLKH) are interaction with membrane phosphatidylinositol 4,5-bisphosphate and RNA. Positions 16 to 22 (WEKIRLR) match the Nuclear export signal motif. Residues 26–32 (KKKYRLK) carry the Nuclear localization signal motif. Residues 73–77 (EELTS) form an interaction with membrane phosphatidylinositol 4,5-bisphosphate region. Residues 106 to 128 (EEQTKSMKKAQQAAADTGNSSQV) are disordered. Phosphotyrosine; by host is present on Tyr-132. The interaction with human PPIA/CYPA and NUP153 stretch occupies residues 189-227 (NTVGGHQAAMQMLKETINEEAAEWDRLHPVHAGPIAPGQ). A dimerization/Multimerization of capsid protein p24 region spans residues 277-363 (YSPVSILDIR…GGPGHKARVL (87 aa)). 2 consecutive CCHC-type zinc fingers follow at residues 390 to 407 (VKCFNCGKEGHIARNCRA) and 411 to 428 (KGCWKCGKEGHQMKECTE). Residues 493–497 (PQITL) are dimerization of protease. Residues 512–581 (KEALLDTGAD…TPVNIIGRNL (70 aa)) form the Peptidase A2 domain. Catalysis depends on Asp-517, which acts as the For protease activity; shared with dimeric partner. 2 dimerization of protease regions span residues 541-547 (GIGGFIK) and 580-592 (NLLTQIGCTLNFP). The 191-residue stretch at 635–825 (EGKISKIGPE…PPFLWMGYEL (191 aa)) folds into the Reverse transcriptase domain. The Mg(2+) site is built by Asp-701, Asp-776, and Asp-777. The segment at 818–826 (FLWMGYELH) is RT 'primer grip'. The short motif at 989 to 1005 (WETWWTEYWQATWIPEW) is the Tryptophan repeat motif element. An RNase H type-1 domain is found at 1025 to 1148 (IVGAETFYVD…VDKLVSAGIR (124 aa)). Mg(2+)-binding residues include Asp-1034, Glu-1069, Asp-1089, and Asp-1140. Residues 1154–1195 (DGIDKAQEDHEKYHSNWRAMASDFNLPPIVAKEIVASCDKCQ) form an Integrase-type zinc finger. Residues His-1163, His-1167, Cys-1191, and Cys-1194 each contribute to the Zn(2+) site. The 151-residue stretch at 1205 to 1355 (VDCSPGIWQL…SAGERIIDII (151 aa)) folds into the Integrase catalytic domain. The Mg(2+) site is built by Asp-1215, Asp-1267, and Glu-1303. The integrase-type DNA-binding region spans 1374–1421 (FRVYYRDNRDPIWKGPAKLLWKGEGAVVIQDNSDIKVVPRRKVKIIRD).

As to quaternary structure, homotrimer; further assembles as hexamers of trimers. Interacts with gp41 (via C-terminus). Interacts with host CALM1; this interaction induces a conformational change in the Matrix protein, triggering exposure of the myristate group. Interacts with host AP3D1; this interaction allows the polyprotein trafficking to multivesicular bodies during virus assembly. Part of the pre-integration complex (PIC) which is composed of viral genome, matrix protein, Vpr and integrase. In terms of assembly, homodimer; the homodimer further multimerizes as homohexamers or homopentamers. Interacts with human PPIA/CYPA; This interaction stabilizes the capsid. Interacts with human NUP153. Interacts with host PDZD8; this interaction stabilizes the capsid. Interacts with monkey TRIM5; this interaction destabilizes the capsid. Homodimer, whose active site consists of two apposed aspartic acid residues. As to quaternary structure, heterodimer of p66 RT and p51 RT (RT p66/p51). Heterodimerization of RT is essential for DNA polymerase activity. The overall folding of the subdomains is similar in p66 RT and p51 RT but the spatial arrangements of the subdomains are dramatically different. In terms of assembly, homotetramer; may further associate as a homohexadecamer. Part of the pre-integration complex (PIC) which is composed of viral genome, matrix protein, Vpr and integrase. Interacts with human SMARCB1/INI1 and human PSIP1/LEDGF isoform 1. Interacts with human KPNA3; this interaction might play a role in nuclear import of the pre-integration complex. Interacts with human NUP153; this interaction might play a role in nuclear import of the pre-integration complex. The cofactor is Mg(2+). In terms of processing, specific enzymatic cleavages by the viral protease yield mature proteins. The protease is released by autocatalytic cleavage. The polyprotein is cleaved during and after budding, this process is termed maturation. Proteolytic cleavage of p66 RT removes the RNase H domain to yield the p51 RT subunit. Nucleocapsid protein p7 might be further cleaved after virus entry. Post-translationally, tyrosine phosphorylated presumably in the virion by a host kinase. Phosphorylation is apparently not a major regulator of membrane association. Phosphorylated possibly by host MAPK1; this phosphorylation is necessary for Pin1-mediated virion uncoating. In terms of processing, methylated by host PRMT6, impairing its function by reducing RNA annealing and the initiation of reverse transcription.

It localises to the host cell membrane. The protein resides in the host endosome. It is found in the host multivesicular body. The protein localises to the virion membrane. Its subcellular location is the host nucleus. It localises to the host cytoplasm. The protein resides in the virion. It catalyses the reaction Specific for a P1 residue that is hydrophobic, and P1' variable, but often Pro.. It carries out the reaction Endohydrolysis of RNA in RNA/DNA hybrids. Three different cleavage modes: 1. sequence-specific internal cleavage of RNA. Human immunodeficiency virus type 1 and Moloney murine leukemia virus enzymes prefer to cleave the RNA strand one nucleotide away from the RNA-DNA junction. 2. RNA 5'-end directed cleavage 13-19 nucleotides from the RNA end. 3. DNA 3'-end directed cleavage 15-20 nucleotides away from the primer terminus.. The enzyme catalyses 3'-end directed exonucleolytic cleavage of viral RNA-DNA hybrid.. The catalysed reaction is DNA(n) + a 2'-deoxyribonucleoside 5'-triphosphate = DNA(n+1) + diphosphate. Its activity is regulated as follows. Protease: The viral protease is inhibited by many synthetic protease inhibitors (PIs), such as amprenavir, atazanavir, indinavir, loprinavir, nelfinavir, ritonavir and saquinavir. Use of protease inhibitors in tritherapy regimens permit more ambitious therapeutic strategies. Reverse transcriptase/ribonuclease H: RT can be inhibited either by nucleoside RT inhibitors (NRTIs) or by non nucleoside RT inhibitors (NNRTIs). NRTIs act as chain terminators, whereas NNRTIs inhibit DNA polymerization by binding a small hydrophobic pocket near the RT active site and inducing an allosteric change in this region. Classical NRTIs are abacavir, adefovir (PMEA), didanosine (ddI), lamivudine (3TC), stavudine (d4T), tenofovir (PMPA), zalcitabine (ddC), and zidovudine (AZT). Classical NNRTIs are atevirdine (BHAP U-87201E), delavirdine, efavirenz (DMP-266), emivirine (I-EBU), and nevirapine (BI-RG-587). The tritherapies used as a basic effective treatment of AIDS associate two NRTIs and one NNRTI. Functionally, mediates, with Gag polyprotein, the essential events in virion assembly, including binding the plasma membrane, making the protein-protein interactions necessary to create spherical particles, recruiting the viral Env proteins, and packaging the genomic RNA via direct interactions with the RNA packaging sequence (Psi). Gag-Pol polyprotein may regulate its own translation, by the binding genomic RNA in the 5'-UTR. At low concentration, the polyprotein would promote translation, whereas at high concentration, the polyprotein would encapsidate genomic RNA and then shut off translation. Targets the polyprotein to the plasma membrane via a multipartite membrane-binding signal, that includes its myristoylated N-terminus. Matrix protein is part of the pre-integration complex. Implicated in the release from host cell mediated by Vpu. Binds to RNA. In terms of biological role, forms the conical core that encapsulates the genomic RNA-nucleocapsid complex in the virion. Most core are conical, with only 7% tubular. The core is constituted by capsid protein hexamer subunits. The core is disassembled soon after virion entry. Host restriction factors such as TRIM5-alpha or TRIMCyp bind retroviral capsids and cause premature capsid disassembly, leading to blocks in reverse transcription. Capsid restriction by TRIM5 is one of the factors which restricts HIV-1 to the human species. Host PIN1 apparently facilitates the virion uncoating. On the other hand, interactions with PDZD8 or CYPA stabilize the capsid. Its function is as follows. Encapsulates and protects viral dimeric unspliced genomic RNA (gRNA). Binds these RNAs through its zinc fingers. Acts as a nucleic acid chaperone which is involved in rearangement of nucleic acid secondary structure during gRNA retrotranscription. Also facilitates template switch leading to recombination. As part of the polyprotein, participates in gRNA dimerization, packaging, tRNA incorporation and virion assembly. Functionally, aspartyl protease that mediates proteolytic cleavages of Gag and Gag-Pol polyproteins during or shortly after the release of the virion from the plasma membrane. Cleavages take place as an ordered, step-wise cascade to yield mature proteins. This process is called maturation. Displays maximal activity during the budding process just prior to particle release from the cell. Also cleaves Nef and Vif, probably concomitantly with viral structural proteins on maturation of virus particles. Hydrolyzes host EIF4GI and PABP1 in order to shut off the capped cellular mRNA translation. The resulting inhibition of cellular protein synthesis serves to ensure maximal viral gene expression and to evade host immune response. Also mediates cleavage of host YTHDF3. Mediates cleavage of host CARD8, thereby activating the CARD8 inflammasome, leading to the clearance of latent HIV-1 in patient CD4(+) T-cells after viral reactivation; in contrast, HIV-1 can evade CARD8-sensing when its protease remains inactive in infected cells prior to viral budding. Multifunctional enzyme that converts the viral RNA genome into dsDNA in the cytoplasm, shortly after virus entry into the cell. This enzyme displays a DNA polymerase activity that can copy either DNA or RNA templates, and a ribonuclease H (RNase H) activity that cleaves the RNA strand of RNA-DNA heteroduplexes in a partially processive 3' to 5' endonucleasic mode. Conversion of viral genomic RNA into dsDNA requires many steps. A tRNA(3)-Lys binds to the primer-binding site (PBS) situated at the 5'-end of the viral RNA. RT uses the 3' end of the tRNA primer to perform a short round of RNA-dependent minus-strand DNA synthesis. The reading proceeds through the U5 region and ends after the repeated (R) region which is present at both ends of viral RNA. The portion of the RNA-DNA heteroduplex is digested by the RNase H, resulting in a ssDNA product attached to the tRNA primer. This ssDNA/tRNA hybridizes with the identical R region situated at the 3' end of viral RNA. This template exchange, known as minus-strand DNA strong stop transfer, can be either intra- or intermolecular. RT uses the 3' end of this newly synthesized short ssDNA to perform the RNA-dependent minus-strand DNA synthesis of the whole template. RNase H digests the RNA template except for two polypurine tracts (PPTs) situated at the 5'-end and near the center of the genome. It is not clear if both polymerase and RNase H activities are simultaneous. RNase H probably can proceed both in a polymerase-dependent (RNA cut into small fragments by the same RT performing DNA synthesis) and a polymerase-independent mode (cleavage of remaining RNA fragments by free RTs). Secondly, RT performs DNA-directed plus-strand DNA synthesis using the PPTs that have not been removed by RNase H as primers. PPTs and tRNA primers are then removed by RNase H. The 3' and 5' ssDNA PBS regions hybridize to form a circular dsDNA intermediate. Strand displacement synthesis by RT to the PBS and PPT ends produces a blunt ended, linear dsDNA copy of the viral genome that includes long terminal repeats (LTRs) at both ends. In terms of biological role, catalyzes viral DNA integration into the host chromosome, by performing a series of DNA cutting and joining reactions. This enzyme activity takes place after virion entry into a cell and reverse transcription of the RNA genome in dsDNA. The first step in the integration process is 3' processing. This step requires a complex comprising the viral genome, matrix protein, Vpr and integrase. This complex is called the pre-integration complex (PIC). The integrase protein removes 2 nucleotides from each 3' end of the viral DNA, leaving recessed CA OH's at the 3' ends. In the second step, the PIC enters cell nucleus. This process is mediated through integrase and Vpr proteins, and allows the virus to infect a non dividing cell. This ability to enter the nucleus is specific of lentiviruses, other retroviruses cannot and rely on cell division to access cell chromosomes. In the third step, termed strand transfer, the integrase protein joins the previously processed 3' ends to the 5' ends of strands of target cellular DNA at the site of integration. The 5'-ends are produced by integrase-catalyzed staggered cuts, 5 bp apart. A Y-shaped, gapped, recombination intermediate results, with the 5'-ends of the viral DNA strands and the 3' ends of target DNA strands remaining unjoined, flanking a gap of 5 bp. The last step is viral DNA integration into host chromosome. This involves host DNA repair synthesis in which the 5 bp gaps between the unjoined strands are filled in and then ligated. Since this process occurs at both cuts flanking the HIV genome, a 5 bp duplication of host DNA is produced at the ends of HIV-1 integration. Alternatively, Integrase may catalyze the excision of viral DNA just after strand transfer, this is termed disintegration. This chain is Gag-Pol polyprotein (gag-pol), found in Human immunodeficiency virus type 1 group M subtype B (isolate JRCSF) (HIV-1).